The chain runs to 315 residues: Cell division protein FtsZ (315 aa).

GTP-binding positions include 55-57 (GTG), E98, R102, and D146.

This sequence belongs to the FtsZ family. As to quaternary structure, homodimer. Polymerizes to form a dynamic ring structure in a strictly GTP-dependent manner. Interacts directly with several other division proteins.

Its subcellular location is the cytoplasm. Functionally, essential cell division protein that forms a contractile ring structure (Z ring) at the future cell division site. The regulation of the ring assembly controls the timing and the location of cell division. One of the functions of the FtsZ ring is to recruit other cell division proteins to the septum to produce a new cell wall between the dividing cells. Binds GTP and shows GTPase activity. This Wolbachia pipientis protein is Cell division protein FtsZ.